We begin with the raw amino-acid sequence, 91 residues long: Probable Fe(2+)-trafficking protein (91 aa).

The protein belongs to the Fe(2+)-trafficking protein family. Monomer.

Its function is as follows. Could be a mediator in iron transactions between iron acquisition and iron-requiring processes, such as synthesis and/or repair of Fe-S clusters in biosynthetic enzymes. This is Probable Fe(2+)-trafficking protein from Klebsiella pneumoniae subsp. pneumoniae (strain ATCC 700721 / MGH 78578).